The chain runs to 520 residues: Cation efflux system protein CzcB (520 aa).

The tract at residues 28–85 (SGRSAPEEQGGHSESKGHGDTEHHGKQAAEADHKDDKSHGDGEHHEVKKGPNGGALFS) is disordered. The segment covering 32-76 (APEEQGGHSESKGHGDTEHHGKQAAEADHKDDKSHGDGEHHEVKK) has biased composition (basic and acidic residues).

The protein belongs to the membrane fusion protein (MFP) (TC 8.A.1) family.

In terms of biological role, czcA and CzcB together would act in zinc efflux nearly as effectively as the complete czc efflux system (CzcABC). The CzcB protein is thought to funnel zinc cations to the CzcA transport protein. This is Cation efflux system protein CzcB (czcB) from Alcaligenes sp. (strain CT14).